A 263-amino-acid polypeptide reads, in one-letter code: Purine nucleoside phosphorylase SACOL1200 (263 aa).

The Zn(2+) site is built by H79, C124, and H141.

Belongs to the purine nucleoside phosphorylase YfiH/LACC1 family. Homodimer. The cofactor is Cu(2+). Zn(2+) serves as cofactor.

The enzyme catalyses adenosine + phosphate = alpha-D-ribose 1-phosphate + adenine. It catalyses the reaction S-methyl-5'-thioadenosine + phosphate = 5-(methylsulfanyl)-alpha-D-ribose 1-phosphate + adenine. It carries out the reaction inosine + phosphate = alpha-D-ribose 1-phosphate + hypoxanthine. The catalysed reaction is adenosine + H2O + H(+) = inosine + NH4(+). Functionally, purine nucleoside enzyme that catalyzes the phosphorolysis of adenosine and inosine nucleosides, yielding D-ribose 1-phosphate and the respective free bases, adenine and hypoxanthine. Also catalyzes the phosphorolysis of S-methyl-5'-thioadenosine into adenine and S-methyl-5-thio-alpha-D-ribose 1-phosphate. Also has adenosine deaminase activity. This is Purine nucleoside phosphorylase SACOL1200 from Staphylococcus aureus (strain COL).